The sequence spans 481 residues: MHITKPHAAMFSSPGMGHVIPVIELGKRLSANNGFHVTVFVLETDAASAQSKFLNSTGVDIVKLPSPDIYGLVDPDDHVVTKIGVIMRAAVPALRSKIAAMHQKPTALIVDLFGTDALCLAKEFNMLSYVFIPTNARFLGVSIYYPNLDKDIKEEHTVQRNPLAIPGCEPVRFEDTLDAYLVPDEPVYRDFVRHGLAYPKADGILVNTWEEMEPKSLKSLLNPKLLGRVARVPVYPIGPLCRPIQSSETDHPVLDWLNEQPNESVLYISFGSGGCLSAKQLTELAWGLEQSQQRFVWVVRPPVDGSCCSEYVSANGGGTEDNTPEYLPEGFVSRTSDRGFVVPSWAPQAEILSHRAVGGFLTHCGWSSTLESVVGGVPMIAWPLFAEQNMNAALLSDELGIAVRLDDPKEDISRWKIEALVRKVMTEKEGEAMRRKVKKLRDSAEMSLSIDGGGLAHESLCRVTKECQRFLERVVDLSRGA.

The Proton acceptor role is filled by His18. Residue His18 participates in an anthocyanidin binding. Asp111 serves as the catalytic Charge relay. The UDP-alpha-D-glucose site is built by Ala346, Gln348, His363, Trp366, Ser368, and Glu371. Ala386 is an an anthocyanidin binding site. 2 residues coordinate UDP-alpha-D-glucose: Glu387 and Gln388.

The protein belongs to the UDP-glycosyltransferase family. Expressed in seedlings and roots.

The catalysed reaction is (E)-4-coumarate + UDP-alpha-D-glucose = 4-O-(beta-D-glucosyl)-trans-4-coumarate + UDP + H(+). It catalyses the reaction (E)-coniferol + UDP-alpha-D-glucose = 4-O-(beta-D-glucosyl)-(E)-coniferol + UDP + H(+). It carries out the reaction (E)-sinapyl alcohol + UDP-alpha-D-glucose = 4-O-(beta-D-glucosyl)-trans-4-sinapoyl alcohol + UDP + H(+). The enzyme catalyses (E)-sinapate + UDP-alpha-D-glucose = 4-O-(beta-D-glucosyl)-trans-sinapate + UDP + H(+). The catalysed reaction is (E)-coniferaldehyde + UDP-alpha-D-glucose = 4-O-(beta-D-glucosyl)-4-(E)-coniferyl aldehyde + UDP + H(+). It catalyses the reaction (E)-sinapaldehyde + UDP-alpha-D-glucose = 4-O-(beta-D-glucosyl)-4-trans-sinapoyl aldehyde + UDP + H(+). Involved in the O-glucosylation of monolignols (alcohol monomers of lignin). Glucosylates coniferyl alcohol to form coniferyl alcohol 4-O-glucoside. Glucosylates sinapyl alcohol to form sinapyl alcohol 4-O-glucoside. Glucosylates coniferyl aldehyde to form coniferyl aldehyde 4-O-glucoside. Glucosylates sinapyl aldehyde to form sinapyl aldehyde 4-O-glucoside. Possesses low activity with sinapate and ferulate as substrates. The protein is UDP-glycosyltransferase 72E2 of Arabidopsis thaliana (Mouse-ear cress).